Here is an 883-residue protein sequence, read N- to C-terminus: Phosphoenolpyruvate carboxylase (883 aa).

Active-site residues include His138 and Lys546.

It belongs to the PEPCase type 1 family. It depends on Mg(2+) as a cofactor.

It carries out the reaction oxaloacetate + phosphate = phosphoenolpyruvate + hydrogencarbonate. Functionally, forms oxaloacetate, a four-carbon dicarboxylic acid source for the tricarboxylic acid cycle. The chain is Phosphoenolpyruvate carboxylase from Salmonella paratyphi A (strain ATCC 9150 / SARB42).